The sequence spans 344 residues: Transcription factor AIG1 (344 aa).

The region spanning 131 to 180 is the bHLH domain; that stretch reads AASKSHSEAERRRRERINTHLAKLRSILPNTTKTDKASLLAEVIQHMKEL. A disordered region spans residues 313-344; sequence NDESNDNNNLEKSSSGGIKRQRTSKMVNRCYN. Low complexity predominate over residues 318–327; that stretch reads DNNNLEKSSS.

As to quaternary structure, homodimer. Interacts with LHW.

The protein localises to the nucleus. Its function is as follows. Transcription factor required for MONOPTEROS-dependent root initiation in embryo. Transcriptionally controlled by MONOPTEROS. The polypeptide is Transcription factor AIG1 (BHLH32) (Arabidopsis thaliana (Mouse-ear cress)).